The primary structure comprises 198 residues: Holliday junction branch migration complex subunit RuvA (198 aa).

The interval 1-63 (MYSYIIGVIT…EDASILYGFS (63 aa)) is domain I. The segment at 64-142 (SQKERELFNL…KDFVPSEKPV (79 aa)) is domain II. The segment at 143-153 (NKEVKRSNDSE) is flexible linker. The interval 153 to 198 (EFAREALLQLGYFKNDVDAFIENTDISGLSIEDIMKKAMKSLDSSR) is domain III.

This sequence belongs to the RuvA family. In terms of assembly, homotetramer. Forms an RuvA(8)-RuvB(12)-Holliday junction (HJ) complex. HJ DNA is sandwiched between 2 RuvA tetramers; dsDNA enters through RuvA and exits via RuvB. An RuvB hexamer assembles on each DNA strand where it exits the tetramer. Each RuvB hexamer is contacted by two RuvA subunits (via domain III) on 2 adjacent RuvB subunits; this complex drives branch migration. In the full resolvosome a probable DNA-RuvA(4)-RuvB(12)-RuvC(2) complex forms which resolves the HJ.

It localises to the cytoplasm. Functionally, the RuvA-RuvB-RuvC complex processes Holliday junction (HJ) DNA during genetic recombination and DNA repair, while the RuvA-RuvB complex plays an important role in the rescue of blocked DNA replication forks via replication fork reversal (RFR). RuvA specifically binds to HJ cruciform DNA, conferring on it an open structure. The RuvB hexamer acts as an ATP-dependent pump, pulling dsDNA into and through the RuvAB complex. HJ branch migration allows RuvC to scan DNA until it finds its consensus sequence, where it cleaves and resolves the cruciform DNA. The protein is Holliday junction branch migration complex subunit RuvA of Finegoldia magna (strain ATCC 29328 / DSM 20472 / WAL 2508) (Peptostreptococcus magnus).